Here is a 1664-residue protein sequence, read N- to C-terminus: MAARRGRRDGVAPPPSGGPGPDPGGGARGSGWGSRSQAPYGTLGAVSGGEQVLLHEEAGDSGFVSLSRLGPSLRDKDLEMEELMLQDETLLGTMQSYMDASLISLIEDFGSLGESRLSLEDQNEVSLLTALTEILDNADSENLSPFDSIPDSELLVSPREGSSLHKLLTLSRTPPERDLITPVDPLGPSTGSSRGSGVEMSLPDPSWDFSPPSFLETSSPKLPSWRPPRSRPRWGQSPPPQQRSDGEEEEEVASFSGQILAGELDNCVSSIPDFPMHLACPEEEDKATAAEMAVPAAGDESISSLSELVRAMHPYCLPNLTHLASLEDELQEQPDDLTLPEGCVVLEIVGQAATAGDDLEIPVVVRQVSPGPRPVLLDDSLETSSALQLLMPTLESETEAAVPKVTLCSEKEGLSLNSEEKLDSACLLKPREVVEPVVPKEPQNPPANAAPGSQRARKGRKKKSKEQPAACVEGYARRLRSSSRGQSTVGTEVTSQVDNLQKQPQEELQKESGPLQGKGKPRAWARAWAAALENSSPKNLERSAGQSSPAKEGPLDLYPKLADTIQTNPIPTHLSLVDSAQASPMPVDSVEADPTAVGPVLAGPVPVDPGLVDLASTSSELVEPLPAEPVLINPVLADSAAVDPAVVPISDNLPPVDAVPSGPAPVDLALVDPVPNDLTPVDPVLVKSRPTDPRRGAVSSALGGSAPQLLVESESLDPPKTIIPEVKEVVDSLKIESGTSATTHEARPRPLSLSEYRRRRQQRQAETEERSPQPPTGKWPSLPETPTGLADIPCLVIPPAPAKKTALQRSPETPLEICLVPVGPSPASPSPEPPVSKPVASSPTEQVPSQEMPLLARPSPPVQSVSPAVPTPPSMSAALPFPAGGLGMPPSLPPPPLQPPSLPLSMGPVLPDPFTHYAPLPSWPCYPHVSPSGYPCLPPPPTVPLVSGTPGAYAVPPTCSVPWAPPPAPVSPYSSTCTYGPLGWGPGPQHAPFWSTVPPPPLPPASIGRAVPQPKMESRGTPAGPPENVLPLSMAPPLSLGLPGHGAPQTEPTKVEVKPVPASPHPKHKVSALVQSPQMKALACVSAEGVTVEEPASERLKPETQETRPREKPPLPATKAVPTPRQSTVPKLPAVHPARLRKLSFLPTPRTQGSEDVVQAFISEIGIEASDLSSLLEQFEKSEAKKECPPPAPADSLAVGNSGGVDIPQEKRPLDRLQAPELANVAGLTPPATPPHQLWKPLAAVSLLAKAKSPKSTAQEGTLKPEGVTEAKHPAAVRLQEGVHGPSRVHVGSGDHDYCVRSRTPPKKMPALVIPEVGSRWNVKRHQDITIKPVLSLGPAAPPPPCIAASREPLDHRTSSEQADPSAPCLAPSSLLSPEASPCRNDMNTRTPPEPSAKQRSMRCYRKACRSASPSSQGWQGRRGRNSRSVSSGSNRTSEASSSSSSSSSSSRSRSRSLSPPHKRWRRSSCSSSGRSRRCSSSSSSSSSSSSSSSSSSSSRSRSRSPSPRRRSDRRRRYSSYRSHDHYQRQRVLQKERAIEERRVVFIGKIPGRMTRSELKQRFSVFGEIEECTIHFRVQGDNYGFVTYRYAEEAFAAIESGHKLRQADEQPFDLCFGGRRQFCKRSYSDLDSNREDFDPAPVKSKFDSLDFDTLLKQAQKNLRR.

7 disordered regions span residues 1–44 (MAAR…GTLG), 167–255 (LLTL…VASF), 436–555 (PVVP…EGPL), 681–701 (VDPVLVKSRPTDPRRGAVSSA), 735–793 (IESG…ADIP), 818–873 (CLVP…PTPP), and 1045–1068 (HGAPQTEPTKVEVKPVPASPHPKH). Over residues 12 to 22 (APPPSGGPGPD) the composition is skewed to pro residues. A compositionally biased stretch (gly residues) spans 23-32 (PGGGARGSGW). Low complexity predominate over residues 201–224 (SLPDPSWDFSPPSFLETSSPKLPS). Ser237 is subject to Phosphoserine. Positions 433–467 (VVEPVVPKEPQNPPANAAPGSQRARKGRKKKSKEQ) are necessary for interaction with CREB1 and NRF1 and for transcriptional coactivation. The segment covering 455-464 (RARKGRKKKS) has biased composition (basic residues). Positions 482 to 499 (SSRGQSTVGTEVTSQVDN) are enriched in polar residues. A compositionally biased stretch (low complexity) spans 522-531 (RAWARAWAAA). Over residues 533-549 (ENSSPKNLERSAGQSSP) the composition is skewed to polar residues. Phosphoserine occurs at positions 536 and 548. Pro residues predominate over residues 823–836 (GPSPASPSPEPPVS). Residues 862–873 (VQSVSPAVPTPP) show a composition bias toward low complexity. The residue at position 1076 (Ser1076) is a Phosphoserine. Disordered stretches follow at residues 1093 to 1130 (EEPASERLKPETQETRPREKPPLPATKAVPTPRQSTVP), 1182 to 1209 (SEAKKECPPPAPADSLAVGNSGGVDIPQ), and 1334 to 1528 (VLSL…DHYQ). Basic and acidic residues predominate over residues 1096–1113 (ASERLKPETQETRPREKP). Residues 1365–1383 (PSAPCLAPSSLLSPEASPC) are compositionally biased toward low complexity. Positions 1379-1450 (EASPCRNDMN…SSSSSSSSSS (72 aa)) are necessary for interaction with CREB1 and NRF1. The span at 1400 to 1409 (RSMRCYRKAC) shows a compositional bias: basic residues. Ser1411 and Ser1413 each carry phosphoserine. Low complexity-rich tracts occupy residues 1427-1459 (SRSVSSGSNRTSEASSSSSSSSSSSRSRSRSLS) and 1468-1500 (SSCSSSGRSRRCSSSSSSSSSSSSSSSSSSSSR). Basic residues predominate over residues 1501-1519 (SRSRSPSPRRRSDRRRRYS). Positions 1543-1619 (RVVFIGKIPG…QPFDLCFGGR (77 aa)) constitute an RRM domain.

As to quaternary structure, interacts with CREB1 and NRF1. As to expression, strongly expressed in heart and skeletal muscle, moderately in lung, placenta, intestine, liver, kidney, spleen, thymus, colon and brain. Also expressed in several oncocytic thyroid tumors.

Its subcellular location is the nucleus. In terms of biological role, acts as a coactivator during transcriptional activation of nuclear genes related to mitochondrial biogenesis and cell growth. Involved in the transcription coactivation of CREB and NRF1 target genes. The polypeptide is Peroxisome proliferator-activated receptor gamma coactivator-related protein 1 (PPRC1) (Homo sapiens (Human)).